Consider the following 444-residue polypeptide: Methylenetetrahydrofolate--tRNA-(uracil-5-)-methyltransferase TrmFO (444 aa).

10–15 contacts FAD; sequence GAGLAG.

The protein belongs to the MnmG family. TrmFO subfamily. The cofactor is FAD.

It localises to the cytoplasm. It catalyses the reaction uridine(54) in tRNA + (6R)-5,10-methylene-5,6,7,8-tetrahydrofolate + NADH + H(+) = 5-methyluridine(54) in tRNA + (6S)-5,6,7,8-tetrahydrofolate + NAD(+). It carries out the reaction uridine(54) in tRNA + (6R)-5,10-methylene-5,6,7,8-tetrahydrofolate + NADPH + H(+) = 5-methyluridine(54) in tRNA + (6S)-5,6,7,8-tetrahydrofolate + NADP(+). Its function is as follows. Catalyzes the folate-dependent formation of 5-methyl-uridine at position 54 (M-5-U54) in all tRNAs. This Streptococcus gordonii (strain Challis / ATCC 35105 / BCRC 15272 / CH1 / DL1 / V288) protein is Methylenetetrahydrofolate--tRNA-(uracil-5-)-methyltransferase TrmFO.